The chain runs to 398 residues: Mannitol-1-phosphate 5-dehydrogenase (398 aa).

A10–G21 lines the NAD(+) pocket. K221 is a catalytic residue.

The protein belongs to the mannitol dehydrogenase family. Monomer.

It carries out the reaction D-mannitol 1-phosphate + NAD(+) = beta-D-fructose 6-phosphate + NADH + H(+). Functionally, catalyzes the NAD(H)-dependent interconversion of D-fructose 6-phosphate and D-mannitol 1-phosphate in the mannitol metabolic pathway. This Chaetomium globosum (strain ATCC 6205 / CBS 148.51 / DSM 1962 / NBRC 6347 / NRRL 1970) (Soil fungus) protein is Mannitol-1-phosphate 5-dehydrogenase.